The following is a 97-amino-acid chain: Large ribosomal subunit protein uL30m (97 aa).

This sequence belongs to the universal ribosomal protein uL30 family. As to quaternary structure, component of the mitochondrial large ribosomal subunit (mt-LSU). Mature yeast 74S mitochondrial ribosomes consist of a small (37S) and a large (54S) subunit. The 37S small subunit contains a 15S ribosomal RNA (15S mt-rRNA) and at least 32 different proteins. The 54S large subunit contains a 21S rRNA (21S mt-rRNA) and at least 45 different proteins.

It localises to the mitochondrion. Component of the mitochondrial ribosome (mitoribosome), a dedicated translation machinery responsible for the synthesis of mitochondrial genome-encoded proteins, including at least some of the essential transmembrane subunits of the mitochondrial respiratory chain. The mitoribosomes are attached to the mitochondrial inner membrane and translation products are cotranslationally integrated into the membrane. The polypeptide is Large ribosomal subunit protein uL30m (mrpl33) (Schizosaccharomyces pombe (strain 972 / ATCC 24843) (Fission yeast)).